The chain runs to 101 residues: Small ribosomal subunit protein uS14 (101 aa).

Belongs to the universal ribosomal protein uS14 family. Part of the 30S ribosomal subunit. Contacts proteins S3 and S10.

In terms of biological role, binds 16S rRNA, required for the assembly of 30S particles and may also be responsible for determining the conformation of the 16S rRNA at the A site. This is Small ribosomal subunit protein uS14 from Buchnera aphidicola subsp. Baizongia pistaciae (strain Bp).